A 267-amino-acid polypeptide reads, in one-letter code: 4-hydroxy-tetrahydrodipicolinate reductase (267 aa).

NAD(+) is bound by residues 9–14 (GASGRM) and Asp35. Arg36 provides a ligand contact to NADP(+). Residues 98–100 (GTT) and 122–125 (ASNF) contribute to the NAD(+) site. Residue His155 is the Proton donor/acceptor of the active site. His156 provides a ligand contact to (S)-2,3,4,5-tetrahydrodipicolinate. Residue Lys159 is the Proton donor of the active site. 165–166 (GT) contacts (S)-2,3,4,5-tetrahydrodipicolinate.

It belongs to the DapB family.

It is found in the cytoplasm. It carries out the reaction (S)-2,3,4,5-tetrahydrodipicolinate + NAD(+) + H2O = (2S,4S)-4-hydroxy-2,3,4,5-tetrahydrodipicolinate + NADH + H(+). It catalyses the reaction (S)-2,3,4,5-tetrahydrodipicolinate + NADP(+) + H2O = (2S,4S)-4-hydroxy-2,3,4,5-tetrahydrodipicolinate + NADPH + H(+). It participates in amino-acid biosynthesis; L-lysine biosynthesis via DAP pathway; (S)-tetrahydrodipicolinate from L-aspartate: step 4/4. Its function is as follows. Catalyzes the conversion of 4-hydroxy-tetrahydrodipicolinate (HTPA) to tetrahydrodipicolinate. The protein is 4-hydroxy-tetrahydrodipicolinate reductase of Chromobacterium violaceum (strain ATCC 12472 / DSM 30191 / JCM 1249 / CCUG 213 / NBRC 12614 / NCIMB 9131 / NCTC 9757 / MK).